A 917-amino-acid polypeptide reads, in one-letter code: Catenin alpha (917 aa).

2 positions are modified to phosphothreonine: Thr-643 and Thr-645. A phosphoserine mark is found at Ser-659 and Ser-662. Basic and acidic residues predominate over residues 878–890 (PLVRPEKPEEVRA). Positions 878-905 (PLVRPEKPEEVRAKVRKGSQKKVQNPIH) are disordered.

Belongs to the vinculin/alpha-catenin family. Interacts with arm/armadillo protein. Post-translationally, rapidly phosphorylated by CK2 and more slowly by CK1.

The protein localises to the cytoplasm. It is found in the cytoskeleton. Its subcellular location is the cell junction. The protein resides in the adherens junction. It localises to the cell membrane. In terms of biological role, associates with the cytoplasmic domain of a variety of cadherins. The association of catenins to cadherins produces a complex which is linked to the actin filament network, and which seems to be of primary importance for cadherins cell-adhesion properties. This is Catenin alpha from Drosophila melanogaster (Fruit fly).